The sequence spans 848 residues: Neuroligin-3 (848 aa).

The first 37 residues, 1-37, serve as a signal peptide directing secretion; it reads MWLQLGLPSLSLSPTPTVGRSLCLILWFLSLVLRAST. Residues 38-709 are Extracellular-facing; sequence QAPAPTVNTH…NPRDYSTELS (672 aa). An N-linked (GlcNAc...) asparagine glycan is attached at N98. An intrachain disulfide couples C106 to C141. Positions 169–195 are disordered; that stretch reads CRKGGSGAKKQGEDLADNDGDEDEDIR. Residues 182–194 are compositionally biased toward acidic residues; sequence DLADNDGDEDEDI. 2 cysteine pairs are disulfide-bonded: C340-C351 and C510-C544. N545 is a glycosylation site (N-linked (GlcNAc...) asparagine). Polar residues-rich tracts occupy residues 645–656 and 677–689; these read TKVPPPDTTHSS and AYSN…SWNG. Positions 645–691 are disordered; sequence TKVPPPDTTHSSHITRRPNGKTWSTKRPAISPAYSNENAPGSWNGDQ. The chain crosses the membrane as a helical span at residues 710 to 730; sequence VTIAVGASLLFLNVLAFAALY. At 731-848 the chain is on the cytoplasmic side; it reads YRKDKRRQEP…LPNSHSTTRV (118 aa). The residue at position 745 (S745) is a Phosphoserine. Y792 is subject to Phosphotyrosine.

Belongs to the type-B carboxylesterase/lipase family. In terms of assembly, homodimer, and heterodimer with NLGN1 and NLGN2. Interacts with neurexins NRXN1, NRXN2 and NRXN3. Interaction with neurexins is mediated by heparan sulfate glycan modification on neurexin. Interacts (via its C-terminus) with DLG4/PSD-95 (via PDZ domain 3). Post-translationally, the N-terminus is blocked. In terms of tissue distribution, detected in brain and on hippocampus neurons, especially at excitatory synapses. Detected in retina (at protein level). Expressed in brain, spinal cord and dorsal root ganglion.

The protein resides in the cell membrane. It localises to the synapse. Its function is as follows. Cell surface protein involved in cell-cell-interactions via its interactions with neurexin family members. Plays a role in synapse function and synaptic signal transmission, and probably mediates its effects by recruiting and clustering other synaptic proteins. May promote the initial formation of synapses, but is not essential for this. May also play a role in glia-glia or glia-neuron interactions in the developing peripheral nervous system. In Rattus norvegicus (Rat), this protein is Neuroligin-3 (Nlgn3).